Here is a 296-residue protein sequence, read N- to C-terminus: tRNA uridine(34) hydroxylase (296 aa).

A Rhodanese domain is found at 121-215 (AQPDVAVIDT…YLEDIPQDQS (95 aa)). The Cysteine persulfide intermediate role is filled by C175.

The protein belongs to the TrhO family.

The catalysed reaction is uridine(34) in tRNA + AH2 + O2 = 5-hydroxyuridine(34) in tRNA + A + H2O. Its function is as follows. Catalyzes oxygen-dependent 5-hydroxyuridine (ho5U) modification at position 34 in tRNAs. This is tRNA uridine(34) hydroxylase from Roseobacter denitrificans (strain ATCC 33942 / OCh 114) (Erythrobacter sp. (strain OCh 114)).